The sequence spans 66 residues: Phylloseptin-S1 (66 aa).

The signal sequence occupies residues 1–22 (MAFLKKSLFLVLFLGLVSLSIC). Positions 23–46 (EEEKRETEEEEHDQEEDDKSEEKR) are excised as a propeptide. The disordered stretch occupies residues 25–44 (EKRETEEEEHDQEEDDKSEE). The segment covering 30–41 (EEEEHDQEEDDK) has biased composition (acidic residues). Residue Phe-65 is modified to Phenylalanine amide.

In terms of tissue distribution, expressed by the skin glands.

The protein localises to the secreted. Its subcellular location is the target cell membrane. Antimicrobial peptide with high activity against Gram-positive bacteria, low activity against Gram-negative bacteria, and moderate activity against fungi. Acts on bacterial biofilms (S.aureus) with the same potency than on bacteria. Acts by causing bacterial membrane disruption inducing leakage of the intracellular content followed by cell death. It adopts an alpha-helical amphipathic structure in membrane environments. Also shows highly potent antiparasitic activity against Leishmania species. Shows low hemolytic activity on horse and human erythrocytes (LC(50)=39 uM). Is also active on human monocytes (IC(50)=23 uM). The polypeptide is Phylloseptin-S1 (Phyllomedusa sauvagei (Sauvage's leaf frog)).